Here is a 309-residue protein sequence, read N- to C-terminus: Glutaminase (309 aa).

Positions 64, 114, 160, 167, 191, 243, and 261 each coordinate substrate.

Belongs to the glutaminase family. In terms of assembly, homotetramer.

It catalyses the reaction L-glutamine + H2O = L-glutamate + NH4(+). In Azorhizobium caulinodans (strain ATCC 43989 / DSM 5975 / JCM 20966 / LMG 6465 / NBRC 14845 / NCIMB 13405 / ORS 571), this protein is Glutaminase.